The chain runs to 364 residues: DNA replication and repair protein RecF (364 aa).

Glycine 30–threonine 37 contacts ATP.

It belongs to the RecF family.

It localises to the cytoplasm. In terms of biological role, the RecF protein is involved in DNA metabolism; it is required for DNA replication and normal SOS inducibility. RecF binds preferentially to single-stranded, linear DNA. It also seems to bind ATP. In Stenotrophomonas maltophilia (strain K279a), this protein is DNA replication and repair protein RecF.